Reading from the N-terminus, the 133-residue chain is Small ribosomal subunit protein eS24y (133 aa).

The interval 104 to 133 (KSRKQIKERKNRAKKIRGVKKTKAGDTKKK) is disordered. A compositionally biased stretch (basic residues) spans 109-125 (IKERKNRAKKIRGVKKT).

The protein belongs to the eukaryotic ribosomal protein eS24 family.

This chain is Small ribosomal subunit protein eS24y (RPS24B), found in Arabidopsis thaliana (Mouse-ear cress).